The following is an 883-amino-acid chain: Aryl hydrocarbon receptor (883 aa).

The propeptide occupies 1-9 (MSSGANITY). The disordered stretch occupies residues 1–38 (MSSGANITYASRKRRKPVQKTVKPIPAEGIKSNPSKRH). 2 consecutive short sequence motifs (nuclear localization signal) follow at residues 12 to 15 (RKRR) and 36 to 41 (KRHRDR). The region spanning 26 to 79 (PAEGIKSNPSKRHRDRLNTELDRLASLLPFPQDVINKLDKLSVLRLSVSYLRAK) is the bHLH domain. The interval 37-65 (RHRDRLNTELDRLASLLPFPQDVINKLDK) is DNA-binding. Required for maintaining the overall integrity of the AHR:ARNT heterodimer and its transcriptional activity regions lie at residues 49–81 (LASL…AKSF), 116–124 (LLQALNGFV), and 260–262 (FAI). A Nuclear export signal motif is present at residues 63 to 71 (LDKLSVLRL). Residues 111 to 175 (QEGEFLLQAL…AEFQRQLHWA (65 aa)) enclose the PAS 1 domain. The region spanning 266 to 336 (LQPPSILEIR…CAESHIRMIK (71 aa)) is the PAS 2 domain. Positions 342–383 (MTVFRLLAKHSRWRWVQSNARLIYRNGRPDYIIATQRPLTDE) constitute a PAC domain. The tract at residues 421–449 (LPIRTKSNTSRKDWAPQSTPSKDSFHPSS) is disordered. Polar residues predominate over residues 436 to 449 (PQSTPSKDSFHPSS).

Homodimer. Heterodimer; efficient DNA binding requires dimerization with another bHLH protein. Interacts with ARNT; the heterodimer ARNT:AHR binds to core DNA sequence 5'-TGCGTG-3' within the dioxin response element (DRE) of target gene promoters and activates their transcription. Binds MYBBP1A. Interacts with coactivators including SRC-1, RIP140 and NOCA7, and with the corepressor SMRT. Interacts with NEDD8 and IVNS1ABP. Interacts with BMAL1. Interacts with HSP90AB1. Interacts with TIPARP; leading to mono-ADP-ribosylation of AHR and subsequent inhibition of AHR. In terms of processing, mono-ADP-ribosylated, leading to inhibit transcription activator activity of AHR.

Its subcellular location is the cytoplasm. The protein localises to the nucleus. Its function is as follows. Ligand-activated transcription factor that enables cells to adapt to changing conditions by sensing compounds from the environment, diet, microbiome and cellular metabolism, and which plays important roles in development, immunity and cancer. Upon ligand binding, translocates into the nucleus, where it heterodimerizes with ARNT and induces transcription by binding to xenobiotic response elements (XRE). Regulates a variety of biological processes, including angiogenesis, hematopoiesis, drug and lipid metabolism, cell motility and immune modulation. Xenobiotics can act as ligands: upon xenobiotic-binding, activates the expression of multiple phase I and II xenobiotic chemical metabolizing enzyme genes (such as the CYP1A1 gene). Mediates biochemical and toxic effects of halogenated aromatic hydrocarbons. Next to xenobiotics, natural ligands derived from plants, microbiota, and endogenous metabolism are potent AHR agonists. Tryptophan (Trp) derivatives constitute an important class of endogenous AHR ligands. Acts as a negative regulator of anti-tumor immunity: indoles and kynurenic acid generated by Trp catabolism act as ligand and activate AHR, thereby promoting AHR-driven cancer cell motility and suppressing adaptive immunity. Regulates the circadian clock by inhibiting the basal and circadian expression of the core circadian component PER1. Inhibits PER1 by repressing the CLOCK-BMAL1 heterodimer mediated transcriptional activation of PER1. The heterodimer ARNT:AHR binds to core DNA sequence 5'-TGCGTG-3' within the dioxin response element (DRE) of target gene promoters and activates their transcription. In Mus musculus molossinus (Japanese house mouse), this protein is Aryl hydrocarbon receptor (Ahr).